The chain runs to 418 residues: L-rhamnose isomerase (418 aa).

The Mn(2+) site is built by His262, Asp294, and Asp296.

The protein belongs to the rhamnose isomerase family. Homotetramer. Mn(2+) is required as a cofactor.

It localises to the cytoplasm. It carries out the reaction L-rhamnopyranose = L-rhamnulose. The protein operates within carbohydrate degradation; L-rhamnose degradation; glycerone phosphate from L-rhamnose: step 1/3. Catalyzes the interconversion of L-rhamnose and L-rhamnulose. The polypeptide is L-rhamnose isomerase (Cronobacter sakazakii (strain ATCC BAA-894) (Enterobacter sakazakii)).